The following is a 368-amino-acid chain: Branched-chain-amino-acid aminotransferase (368 aa).

Pyridoxal 5'-phosphate is bound at residue R101. K204 carries the post-translational modification N6-(pyridoxal phosphate)lysine. Pyridoxal 5'-phosphate-binding positions include Y209 and 271 to 272; that span reads IT. Residue K299 forms an Isoglutamyl lysine isopeptide (Lys-Gln) (interchain with Q-Cter in protein Pup) linkage. T314 contacts pyridoxal 5'-phosphate.

The protein belongs to the class-IV pyridoxal-phosphate-dependent aminotransferase family. As to quaternary structure, homodimer. Pyridoxal 5'-phosphate is required as a cofactor.

The enzyme catalyses L-isoleucine + 2-oxoglutarate = (S)-3-methyl-2-oxopentanoate + L-glutamate. It carries out the reaction L-valine + 2-oxoglutarate = 3-methyl-2-oxobutanoate + L-glutamate. It catalyses the reaction L-leucine + 2-oxoglutarate = 4-methyl-2-oxopentanoate + L-glutamate. It functions in the pathway amino-acid biosynthesis; L-isoleucine biosynthesis; L-isoleucine from 2-oxobutanoate: step 4/4. It participates in amino-acid biosynthesis; L-leucine biosynthesis; L-leucine from 3-methyl-2-oxobutanoate: step 4/4. The protein operates within amino-acid biosynthesis; L-valine biosynthesis; L-valine from pyruvate: step 4/4. Its activity is regulated as follows. Inhibited by ammonium sulfate at millimolar concentrations and by O-benzylhydroxylamine (Obe). Its function is as follows. Catalyzes the reversible transfers of an amino group from glutamate to the alpha-ketoacid of the respective amino acid in the final step in the biosynthesis of branchedchain amino acids. The amino acids can be ranked in the following order with respect to their efficiency as amino donor: Leu &gt; Ile &gt; Val. The chain is Branched-chain-amino-acid aminotransferase (ilvE) from Mycolicibacterium smegmatis (strain ATCC 700084 / mc(2)155) (Mycobacterium smegmatis).